The chain runs to 40 residues: MPCPCGSGCKCASQATKGSCNCGSDCKCGGDKKSACGCSE.

Belongs to the metallothionein superfamily. Type 5 family.

Its function is as follows. This protein binds cations of several transition elements. It is thought to be involved in detoxification processes. The polypeptide is Metallothionein-1 (MtnA) (Drosophila melanogaster (Fruit fly)).